A 118-amino-acid polypeptide reads, in one-letter code: MARVKRGVVARARHKKVLKQAKGYYGARSRVYRVAVQAVTKAGQYAYRDRRQKKRQFRQLWIARINAAARQNGMSYSRFINGLKKASVEIDRKILADIAVHDKNAFSALVDAAKGALA.

This sequence belongs to the bacterial ribosomal protein bL20 family.

Binds directly to 23S ribosomal RNA and is necessary for the in vitro assembly process of the 50S ribosomal subunit. It is not involved in the protein synthesizing functions of that subunit. The polypeptide is Large ribosomal subunit protein bL20 (Pseudoalteromonas atlantica (strain T6c / ATCC BAA-1087)).